Here is a 211-residue protein sequence, read N- to C-terminus: Uracil phosphoribosyltransferase (211 aa).

5-phospho-alpha-D-ribose 1-diphosphate contacts are provided by residues R78, R103, and 130 to 138; that span reads DPMLATGNS. Uracil-binding positions include I193 and 198 to 200; that span reads GDA. D199 contributes to the 5-phospho-alpha-D-ribose 1-diphosphate binding site.

This sequence belongs to the UPRTase family. Mg(2+) serves as cofactor.

It catalyses the reaction UMP + diphosphate = 5-phospho-alpha-D-ribose 1-diphosphate + uracil. It functions in the pathway pyrimidine metabolism; UMP biosynthesis via salvage pathway; UMP from uracil: step 1/1. With respect to regulation, allosterically activated by GTP. Its function is as follows. Catalyzes the conversion of uracil and 5-phospho-alpha-D-ribose 1-diphosphate (PRPP) to UMP and diphosphate. This chain is Uracil phosphoribosyltransferase, found in Acinetobacter baumannii (strain AB307-0294).